The following is a 406-amino-acid chain: Copper transport protein CTR1 (406 aa).

The Cytoplasmic segment spans residues 1–152 (MEGMNMGSSM…HHLHANNSGK (152 aa)). A run of 3 repeats spans residues 9–27 (SMNM…SSMA), 28–46 (SMSM…SSMS), and 47–65 (SMSM…STMS). A 3 X 19 AA tandem repeats of S-M-X-M-X-A-M-S-S-A-S-K-T-X-X-S-X-M-X region spans residues 9-65 (SMNMDAMSSASKTVASSMASMSMDAMSSASKTILSSMSSMSMEAMSSASKTLASTMS). The interval 71–117 (SMGSSSMSGMSMSMSSTPTSSASAQTTSDSSMSGMSGMSSSDNSSSS) is disordered. The helical transmembrane segment at 153 to 173 (AFGIFLLFVVAAFVYKLLLFV) threads the bilayer. Topologically, residues 174–250 (SWCLEVHWFK…RAFLVFTSTM (77 aa)) are extracellular. Residues 251 to 271 (IIYMLMLATMSFVLTYVFAVI) form a helical membrane-spanning segment. At 272-406 (TGLALSEVFF…LLPAEKFTHN (135 aa)) the chain is on the cytoplasmic side. An REP-III motif is present at residues 304–315 (CPGFGNCQCGRH). The interval 318 to 406 (PSPDPIAVAD…LLPAEKFTHN (89 aa)) is disordered. Position 344 is a phosphoserine (serine 344). Residue lysine 345 forms a Glycyl lysine isopeptide (Lys-Gly) (interchain with G-Cter in ubiquitin) linkage. Phosphoserine is present on serine 349. Polar residues-rich tracts occupy residues 349–375 (SENN…NQAN) and 384–395 (SKLQEQSGNMDQ). Threonine 356 bears the Phosphothreonine mark. Serine 369 is subject to Phosphoserine.

Homooligomer. In terms of processing, extensively O-glycosylated.

It is found in the cell membrane. It carries out the reaction Cu(2+)(in) = Cu(2+)(out). High-affinity copper transporter of plasma membrane that mediates copper uptake under low copper conditions. Copper transport through the high affinity system requiring CTRl supplies the iron transport multicopper ferroxidase FET3 with copper, which in turn is required for ferrous iron uptake. The energy for translocation is unlikely to be directly derived from ATP hydrolysis and the exact mechanism driving the transmembrane transport of copper has still to be determined. Binds 4 copper ions via its C-terminal cystein-rich domain and is able to deliver Cu(I) directly to both the chaperone ATX1 and to an N-terminal domain of the CCC2 protein. Also able to mediate the uptake of the anticancer drug cisplatin. This is Copper transport protein CTR1 from Saccharomyces cerevisiae (strain ATCC 204508 / S288c) (Baker's yeast).